The sequence spans 244 residues: NAD-dependent protein deacetylase (244 aa).

In terms of domain architecture, Deacetylase sirtuin-type spans 1 to 244; the sequence is MTGEQLAHWI…LSAVQRAVMP (244 aa). Ala22, Thr26, Phe33, Arg34, Gln103, Ile105, Asp106, and His121 together coordinate NAD(+). Phe33 contributes to the nicotinamide binding site. The nicotinamide site is built by Ile105 and Asp106. His121 functions as the Proton acceptor in the catalytic mechanism. Residues Cys129, Cys132, Cys150, and Cys152 each coordinate Zn(2+). NAD(+)-binding residues include Thr190, Ser191, Asn213, and Leu231.

It belongs to the sirtuin family. Class U subfamily. Zn(2+) is required as a cofactor.

It is found in the cytoplasm. It catalyses the reaction N(6)-acetyl-L-lysyl-[protein] + NAD(+) + H2O = 2''-O-acetyl-ADP-D-ribose + nicotinamide + L-lysyl-[protein]. In terms of biological role, NAD-dependent protein deacetylase which modulates the activities of several enzymes which are inactive in their acetylated form. The chain is NAD-dependent protein deacetylase from Cutibacterium acnes (strain DSM 16379 / KPA171202) (Propionibacterium acnes).